The primary structure comprises 84 residues: Toxin To10 (84 aa).

An N-terminal signal peptide occupies residues 1-19 (MNYSTLIAVASLLTAGTES). Residues 21-80 (KDGYPVEGSCAFPCGYDNAYCDKLCKERKADSGYCYWVNILCYCYGLPDNAAIKGYGRCK) enclose the LCN-type CS-alpha/beta domain. Intrachain disulfides connect cysteine 30–cysteine 79, cysteine 34–cysteine 55, cysteine 41–cysteine 62, and cysteine 45–cysteine 64. A Proline amide modification is found at proline 81.

It belongs to the long (4 C-C) scorpion toxin superfamily. Sodium channel inhibitor family. Alpha subfamily. Expressed by the venom gland.

The protein resides in the secreted. Alpha toxins bind voltage-independently at site-3 of sodium channels (Nav) and inhibit the inactivation of the activated channels, thereby blocking neuronal transmission. The sequence is that of Toxin To10 from Tityus obscurus (Amazonian scorpion).